Consider the following 544-residue polypeptide: Secreted aspartic protease 9 (544 aa).

The signal sequence occupies residues 1-17 (MRLNSVALLSLVATALA). The tract at residues 31–50 (GESKDDLSPEDDSNPRFVKR) is disordered. The region spanning 65–479 (YMATLKIGSN…DLDDYEVSLA (415 aa)) is the Peptidase A1 domain. Asp-83 is an active-site residue. 83 to 85 (DTG) is a binding site for pepstatin A. A disulfide bridge links Cys-98 with Cys-195. 3 N-linked (GlcNAc...) asparagine glycosylation sites follow: Asn-212, Asn-240, and Asn-252. The active site involves Asp-371. 371–375 (DTGST) is a pepstatin A binding site. A disulfide bridge connects residues Cys-406 and Cys-441. N-linked (GlcNAc...) asparagine glycosylation is found at Asn-422 and Asn-499. Positions 500 to 519 (SSGSGTTSSSGTSTSTSTRH) are disordered. Residue Ser-520 is the site of GPI-anchor amidated serine attachment. The propeptide at 521–544 (AGSIISKPVYGLLLSLLISCYVLV) is removed in mature form. Residues 524–544 (IISKPVYGLLLSLLISCYVLV) traverse the membrane as a helical segment.

It belongs to the peptidase A1 family. As to quaternary structure, monomer. The GPI-anchor is attached to the protein in the endoplasmic reticulum and serves to target the protein to the cell surface. There, the glucosamine-inositol phospholipid moiety is cleaved off and the GPI-modified mannoprotein is covalently attached via its lipidless GPI glycan remnant to the 1,6-beta-glucan of the outer cell wall layer.

The protein resides in the cell membrane. It localises to the secreted. The protein localises to the cell wall. The catalysed reaction is Preferential cleavage at the carboxyl of hydrophobic amino acids, but fails to cleave 15-Leu-|-Tyr-16, 16-Tyr-|-Leu-17 and 24-Phe-|-Phe-25 of insulin B chain. Activates trypsinogen, and degrades keratin.. Its function is as follows. Secreted aspartic peptidases (SAPs) are a group of ten acidic hydrolases considered as key virulence factors. These enzymes supply the fungus with nutrient amino acids as well as are able to degrade the selected host's proteins involved in the immune defense. Moreover, acts toward human hemoglobin though limited proteolysis to generate a variety of antimicrobial hemocidins, enabling to compete with the other microorganisms of the same physiological niche using the microbicidal peptides generated from the host protein. Plays a key role in defense against host by cleaving histatin-5 (Hst 5), a peptide from human saliva that carries out fungicidal activity. The cleavage rate decreases in an order of SAP2 &gt; SAP9 &gt; SAP3 &gt; SAP7 &gt; SAP4 &gt; SAP1 &gt; SAP8. The first cleavage occurs between residues 'Lys-17' and 'His-18' of Hst 5, giving DSHAKRHHGYKRKFHEK and HHSHRGY peptides. Simultaneously, the DSHAKRHHGYKRK peptide is also formed. Further fragmentation by SAP9 results in FHEK product. In Candida albicans (strain SC5314 / ATCC MYA-2876) (Yeast), this protein is Secreted aspartic protease 9.